We begin with the raw amino-acid sequence, 485 residues long: U4/U6 small nuclear ribonucleoprotein Prp31 homolog (485 aa).

Disordered stretches follow at residues 1 to 36 (MATLEDSFLADLDELSDNEAELDENDGDVGKEEEDV) and 329 to 361 (IEKWQEPPPARQPKPLPVPDSEPKKRRGGRRLR). Acidic residues predominate over residues 11–36 (DLDELSDNEAELDENDGDVGKEEEDV). The Nop domain occupies 216 to 334 (IAPNLSAIVG…IRKKIEKWQE (119 aa)). Residues 334 to 348 (EPPPARQPKPLPVPD) show a composition bias toward pro residues. Residues 352 to 361 (KKRRGGRRLR) show a composition bias toward basic residues. Positions 352–365 (KKRRGGRRLRKMKE) match the Nuclear localization signal motif.

Belongs to the PRP31 family. In terms of assembly, component of the U4/U6-U5 tri-snRNP complex composed of the U4, U6 and U5 snRNAs and pre-mRNA-splicing factors. Interacts with STA1 and SOP1.

It localises to the nucleus. Its subcellular location is the cajal body. Functionally, involved in pre-mRNA splicing. Required for the assembly of the U4/U5/U6 tri-snRNP complex, one of the building blocks of the spliceosome. Functions in association with STA1 and ZOP1 in spliceosome dynamics and pre-mRNA splicing. Required for transcriptional regulation and pre-mRNA splicing of cold-responsive genes, such as LTI78/RD29A, KIN2/COR6.6 or COR15A, especially under cold stress. May play a role in stress response. Involved in transcriptional gene silencing of endogenous transposable elements, independently of the RNA-directed DNA methylation (RdDM) pathway. Seems not to participate in the small RNA biogenesis of the RdDM pathway. The chain is U4/U6 small nuclear ribonucleoprotein Prp31 homolog from Arabidopsis thaliana (Mouse-ear cress).